A 286-amino-acid polypeptide reads, in one-letter code: MKSNGHPSNNSINEPIKQQETKQNNKSSHKTPHKPPYLARAKFQPKTSSFSNSSFQSSTPPKPQIALKSPSPSPSQPKTSSSSYSSLSSPSPSQPKTSSPSLPSSTPPKPRQIALKSPSSSSSSQPKTSSSSYSSLPSSTPPKPQHIELKSPSTVKKSPIVKKTNSPKGSKFKKTIRSSRSTRAGLTISVSRVEKLLRGRRYSKRVSPTSCVFLAAVLEYMVLELLELSLNELSLSKKSRRIKNRHINLSILKDVELSALLNDVIICSGGVLSSIHPSLLKLKKDQ.

A compositionally biased stretch (polar residues) spans Met1 to Lys26. The disordered stretch occupies residues Met1–Arg180. 3 stretches are compositionally biased toward low complexity: residues Gln44–Thr59, Gln76–Ser104, and Leu115–Ser138.

This sequence belongs to the histone H2A family.

The polypeptide is Histone H2A.v2 (H2Av2) (Dictyostelium discoideum (Social amoeba)).